Here is a 111-residue protein sequence, read N- to C-terminus: Natriuretic peptide TNP-b (111 aa).

Residues 1–27 (MVGLSRLAGGGLLLLLLLALLPLALDG) form the signal peptide. A propeptide spanning residues 28-71 (KPAPLPQALPEALAGGTTALRRDVTEEQQQQLVAEESSGPAAGR) is cleaved from the precursor. 2 disordered regions span residues 51-77 (VTEE…PKIG) and 92-111 (SGLG…PGGS). The cysteines at positions 80 and 96 are disulfide-linked. The propeptide occupies 107–111 (IPGGS).

The protein belongs to the natriuretic peptide family. In terms of tissue distribution, expressed by the venom gland.

It is found in the secreted. Its function is as follows. Snake venom natriuretic peptide that exhibits vasoactive and probable hypotensive activity. Is only weakly active on natriuretic peptide receptor-C (NPR3). The chain is Natriuretic peptide TNP-b from Oxyuranus scutellatus scutellatus (Australian taipan).